The primary structure comprises 448 residues: Exodeoxyribonuclease 7 large subunit (448 aa).

The protein belongs to the XseA family. In terms of assembly, heterooligomer composed of large and small subunits.

Its subcellular location is the cytoplasm. The catalysed reaction is Exonucleolytic cleavage in either 5'- to 3'- or 3'- to 5'-direction to yield nucleoside 5'-phosphates.. Functionally, bidirectionally degrades single-stranded DNA into large acid-insoluble oligonucleotides, which are then degraded further into small acid-soluble oligonucleotides. The sequence is that of Exodeoxyribonuclease 7 large subunit from Shewanella baltica (strain OS223).